The sequence spans 331 residues: Fe-S cluster assembly protein DRE2 (331 aa).

The interval 1 to 146 is N-terminal SAM-like domain; it reads MSEILLLLHP…MPTFKKPVSS (146 aa). The tract at residues 142 to 164 is disordered; it reads KPVSSPVTLTDTSANNTDAEDDL. A compositionally biased stretch (polar residues) spans 146-158; the sequence is SPVTLTDTSANNT. The segment at 147–202 is linker; sequence PVTLTDTSANNTDAEDDLSMKRKLDSTKLAYFSDDSSGEEDDLIDENELIADSHKF. [2Fe-2S] cluster is bound by residues Cys-212, Cys-224, Cys-227, and Cys-229. The fe-S binding site A stretch occupies residues 212–229; sequence CELPNGKKRKKACKDCTC. Residues Cys-294, Cys-297, Cys-305, and Cys-308 each coordinate [4Fe-4S] cluster. Short sequence motifs (cx2C motif) lie at residues 294-297 and 305-308; these read CSSC and CDGC. Residues 294–308 are fe-S binding site B; it reads CSSCALGDAFRCDGC.

This sequence belongs to the anamorsin family. As to quaternary structure, monomer. Interacts with TAH18. Interacts with MIA40. [2Fe-2S] cluster is required as a cofactor. It depends on [4Fe-4S] cluster as a cofactor.

It is found in the cytoplasm. Its subcellular location is the mitochondrion intermembrane space. Component of the cytosolic iron-sulfur (Fe-S) protein assembly (CIA) machinery required for the maturation of extramitochondrial Fe-S proteins. Part of an electron transfer chain functioning in an early step of cytosolic Fe-S biogenesis, facilitating the de novo assembly of a [4Fe-4S] cluster on the scaffold complex CFD1-NBP35. Electrons are transferred to DRE2 from NADPH via the FAD- and FMN-containing protein TAH18. TAH18-DRE2 are also required for the assembly of the diferric tyrosyl radical cofactor of ribonucleotide reductase (RNR), probably by providing electrons for reduction during radical cofactor maturation in the catalytic small subunit RNR2. This is Fe-S cluster assembly protein DRE2 from Clavispora lusitaniae (strain ATCC 42720) (Yeast).